The primary structure comprises 277 residues: Large ribosomal subunit protein uL2 (277 aa).

Disordered stretches follow at residues 38 to 58 and 219 to 277; these read HRKG…GGGH and TVRG…RKNK.

It belongs to the universal ribosomal protein uL2 family. Part of the 50S ribosomal subunit. Forms a bridge to the 30S subunit in the 70S ribosome.

In terms of biological role, one of the primary rRNA binding proteins. Required for association of the 30S and 50S subunits to form the 70S ribosome, for tRNA binding and peptide bond formation. It has been suggested to have peptidyltransferase activity; this is somewhat controversial. Makes several contacts with the 16S rRNA in the 70S ribosome. The protein is Large ribosomal subunit protein uL2 of Bacillus pumilus (strain SAFR-032).